A 316-amino-acid chain; its full sequence is MKIIFAGTPVFAAKALEAVQKSGFDILLVLTQPDRPAGRGMKLQASPVKILAQQYNIPLLQPETLKSPDIQTQLETLKPDVMIVAAYGLILPEAVLRIPRHGCINIHASLLPRWRGAAPIQRALLEGDAETGISIMQMDQGLDTGAVLLKRAFLIEPHDTAATLHDKLADLGGKCIVETLTLLDQDKLTPTLQDNASACYAAKIRKSEAEIDWTRDSTHIDRMIRTFNPYPGAFTSLHGSMIKLWQANIINRSDTRQAGEIIAADHNGIIVACGRDALSINILQKAGGKKLTAAQFLAGHPLQPGEHFQKTTQGHL.

109 to 112 (SLLP) contributes to the (6S)-5,6,7,8-tetrahydrofolate binding site.

It belongs to the Fmt family.

It carries out the reaction L-methionyl-tRNA(fMet) + (6R)-10-formyltetrahydrofolate = N-formyl-L-methionyl-tRNA(fMet) + (6S)-5,6,7,8-tetrahydrofolate + H(+). Attaches a formyl group to the free amino group of methionyl-tRNA(fMet). The formyl group appears to play a dual role in the initiator identity of N-formylmethionyl-tRNA by promoting its recognition by IF2 and preventing the misappropriation of this tRNA by the elongation apparatus. This chain is Methionyl-tRNA formyltransferase, found in Nitrosomonas eutropha (strain DSM 101675 / C91 / Nm57).